The chain runs to 84 residues: Molybdopterin synthase sulfur carrier subunit (84 aa).

1-thioglycine; alternate is present on Gly84. Gly84 carries the post-translational modification Glycyl adenylate; alternate.

Belongs to the MoaD family. MOCS2A subfamily. As to quaternary structure, heterotetramer; composed of 2 small (MOCS2A) and 2 large (MOCS2B) subunits. In terms of processing, C-terminal thiocarboxylation occurs in 2 steps, it is first acyl-adenylated (-COAMP) via the hesA/moeB/thiF part of MOCS3, then thiocarboxylated (-COSH) via the rhodanese domain of MOCS3.

The protein resides in the cytoplasm. Its pathway is cofactor biosynthesis; molybdopterin biosynthesis. Its function is as follows. Acts as a sulfur carrier required for molybdopterin biosynthesis. Component of the molybdopterin synthase complex that catalyzes the conversion of precursor Z into molybdopterin by mediating the incorporation of 2 sulfur atoms into precursor Z to generate a dithiolene group. In the complex, serves as sulfur donor by being thiocarboxylated (-COSH) at its C-terminus by MOCS3. After interaction with MOCS2B, the sulfur is then transferred to precursor Z to form molybdopterin. The polypeptide is Molybdopterin synthase sulfur carrier subunit (Caenorhabditis briggsae).